Consider the following 370-residue polypeptide: Protein RKD5 (370 aa).

The disordered stretch occupies residues 193–232 (DSETESEESVNEKTEHSEFENDKTEQSESDAKTEILKKKK). Basic and acidic residues predominate over residues 202–228 (VNEKTEHSEFENDKTEQSESDAKTEIL). An RWP-RK domain is found at 224 to 309 (KTEILKKKKR…AEKQQEKNEA (86 aa)). Positions 283 to 328 (HRKIKSLDCLIHDLQREAEKQQEKNEAAAMAVAKKQEKLETEKRNI) form a coiled coil. Residues 347–370 (NFKKRHRASRAKKNQESLVTSSST) form a disordered region. The segment covering 349–358 (KKRHRASRAK) has biased composition (basic residues).

The protein resides in the nucleus. Its function is as follows. Putative transcription factor. This Arabidopsis thaliana (Mouse-ear cress) protein is Protein RKD5 (RKD5).